Here is a 462-residue protein sequence, read N- to C-terminus: tRNA modification GTPase MnmE (462 aa).

Positions 27, 89, and 128 each coordinate (6S)-5-formyl-5,6,7,8-tetrahydrofolate. Positions 223-383 constitute a TrmE-type G domain; the sequence is GLKIAIVGRP…LEAAILAAVG (161 aa). GTP-binding positions include 233-238, 252-258, and 277-280; these read NVGKSS, TDLPGRT, and DTAG. Residues Ser-237 and Thr-258 each coordinate Mg(2+). (6S)-5-formyl-5,6,7,8-tetrahydrofolate is bound at residue Lys-462.

It belongs to the TRAFAC class TrmE-Era-EngA-EngB-Septin-like GTPase superfamily. TrmE GTPase family. In terms of assembly, homodimer. Heterotetramer of two MnmE and two MnmG subunits. Requires K(+) as cofactor.

The protein resides in the cytoplasm. In terms of biological role, exhibits a very high intrinsic GTPase hydrolysis rate. Involved in the addition of a carboxymethylaminomethyl (cmnm) group at the wobble position (U34) of certain tRNAs, forming tRNA-cmnm(5)s(2)U34. The chain is tRNA modification GTPase MnmE from Synechococcus sp. (strain ATCC 27144 / PCC 6301 / SAUG 1402/1) (Anacystis nidulans).